Consider the following 1343-residue polypeptide: Xanthine dehydrogenase (1343 aa).

In terms of domain architecture, 2Fe-2S ferredoxin-type spans Ser-8 to Ile-95. Residues Cys-47, Cys-52, Cys-55, Cys-77, Cys-117, Cys-120, Cys-152, and Cys-154 each coordinate [2Fe-2S] cluster. One can recognise an FAD-binding PCMH-type domain in the interval Phe-235–Pro-424. FAD-binding positions include Leu-263–Val-270, Phe-343, Cys-353–Asn-357, Asp-366, Leu-414, and Lys-432. The Mo-molybdopterin site is built by Gln-780 and Phe-811. Substrate-binding residues include Glu-815 and Arg-893. Position 925 (Arg-925) interacts with Mo-molybdopterin. A substrate-binding site is contributed by Phe-927. Residue Ala-1092 participates in Mo-molybdopterin binding. The Proton acceptor role is filled by Glu-1275.

It belongs to the xanthine dehydrogenase family. Homodimer. FAD serves as cofactor. The cofactor is Mo-molybdopterin. Requires [2Fe-2S] cluster as cofactor.

The protein localises to the peroxisome. It catalyses the reaction xanthine + NAD(+) + H2O = urate + NADH + H(+). It carries out the reaction hypoxanthine + NAD(+) + H2O = xanthine + NADH + H(+). Functionally, key enzyme in purine degradation. Catalyzes the oxidation of hypoxanthine to xanthine. Catalyzes the oxidation of xanthine to uric acid. This chain is Xanthine dehydrogenase (ry), found in Drosophila pseudoobscura pseudoobscura (Fruit fly).